A 399-amino-acid polypeptide reads, in one-letter code: Transmembrane protein 237 homolog (399 aa).

Residues M1–P11 are compositionally biased toward pro residues. Residues M1–K158 are disordered. Composition is skewed to basic and acidic residues over residues N36–N45, E111–R135, and K144–K158. The next 4 helical transmembrane spans lie at I222–F242, M256–I276, G301–L321, and V343–P363.

This sequence belongs to the TMEM237 family.

It localises to the membrane. The protein localises to the cell projection. The protein resides in the cilium. In terms of biological role, component of the transition zone in primary cilia. Required for ciliogenesis. This Caenorhabditis elegans protein is Transmembrane protein 237 homolog.